We begin with the raw amino-acid sequence, 306 residues long: tRNA dimethylallyltransferase (306 aa).

Position 11–18 (11–18) interacts with ATP; sequence APTAAGKT. 13–18 contacts substrate; the sequence is TAAGKT.

The protein belongs to the IPP transferase family. As to quaternary structure, monomer. Mg(2+) is required as a cofactor.

It catalyses the reaction adenosine(37) in tRNA + dimethylallyl diphosphate = N(6)-dimethylallyladenosine(37) in tRNA + diphosphate. Catalyzes the transfer of a dimethylallyl group onto the adenine at position 37 in tRNAs that read codons beginning with uridine, leading to the formation of N6-(dimethylallyl)adenosine (i(6)A). The sequence is that of tRNA dimethylallyltransferase from Deinococcus radiodurans (strain ATCC 13939 / DSM 20539 / JCM 16871 / CCUG 27074 / LMG 4051 / NBRC 15346 / NCIMB 9279 / VKM B-1422 / R1).